The chain runs to 493 residues: MFKFATAVILCLAASSTLAQHNPHWWGNRNTIVHLFEWKWSDIAAECENFLGPKGFAGVQVSPVNENIISAGRPWWERYQPISYKLITRSGNEQEFADMVRRCNDVGVRIYVDVLLNHMSGDFDGIAVGTAGSEAEPSKKSYPGVPYSAQDFHPSCEITDWNDRFQVQQCELVGLKDLDQSSEWVRSKLIEFLDHLIELGVAGFRVDAAKHMAADDLSYIYSTISDLNTEHGFPHNARPFIFQEVIDHGHETVSREEYNQLGAVTEFRFSEEIGNAFRGNNALKWLQSWGTGWGFLASGQALTFVDNHDNQRDMGAVLNYKSPKQYKMATAFHLAYPYGISRVMSSFAFDDHDTAPPQDEQERIISPEFDEEGACVNGWICEHRWRQIYAMVGFKNAVRDTELSNWWDNGDSQISFCRGNKGFLAVNNNLYDLSQELQTCLPAGVYCDVICGSLVDGSCTGKSVIVDDSGFGYIHIGSEDFDGVLALHVDARV.

The N-terminal stretch at Met1–Ala19 is a signal peptide. Position 20 is a pyrrolidone carboxylic acid (Gln20). Cys47 and Cys103 are joined by a disulfide. Ca(2+)-binding residues include Asn117, Gln168, and Asp177. An intrachain disulfide couples Cys156 to Cys170. Arg205 contacts chloride. The active-site Nucleophile is the Asp207. His211 serves as a coordination point for Ca(2+). Residue Glu244 is the Proton donor of the active site. Positions 307 and 342 each coordinate chloride. Disulfide bonds link Cys375-Cys381, Cys417-Cys440, and Cys447-Cys459.

This sequence belongs to the glycosyl hydrolase 13 family. Monomer. The cofactor is Ca(2+). Chloride is required as a cofactor.

It localises to the secreted. It carries out the reaction Endohydrolysis of (1-&gt;4)-alpha-D-glucosidic linkages in polysaccharides containing three or more (1-&gt;4)-alpha-linked D-glucose units.. In Drosophila ananassae (Fruit fly), this protein is Alpha-amylase-related protein (Amyrel).